The primary structure comprises 623 residues: Kelch repeat and BTB domain-containing protein 12 (623 aa).

The BTB domain maps to 25-92 (TDVVLVAEGV…MYSSNLPLTA (68 aa)). Positions 127-236 (CLGIYYYARD…GVDYLKGTMK (110 aa)) constitute a BACK domain. Kelch repeat units follow at residues 390–440 (NLYL…RMKG), 441–496 (RLYV…ALNG), 498–551 (IYVL…ASNA), and 557–607 (KLYV…LVAN).

This Danio rerio (Zebrafish) protein is Kelch repeat and BTB domain-containing protein 12 (kbtbd12).